A 184-amino-acid chain; its full sequence is UPF0398 protein OB1025 (184 aa).

The protein belongs to the UPF0398 family.

The sequence is that of UPF0398 protein OB1025 from Oceanobacillus iheyensis (strain DSM 14371 / CIP 107618 / JCM 11309 / KCTC 3954 / HTE831).